Reading from the N-terminus, the 148-residue chain is Cytochrome c-type biogenesis protein CcmE (148 aa).

Residues 1-7 lie on the Cytoplasmic side of the membrane; sequence MKPRNRR. A helical; Signal-anchor for type II membrane protein transmembrane segment spans residues 8–28; that stretch reads IALIVAGLSALGIATALVLNA. The Periplasmic portion of the chain corresponds to 29 to 148; that stretch reads FQSNLVFFFT…VQKKPASRKP (120 aa). Histidine 123 and tyrosine 127 together coordinate heme. A disordered region spans residues 128 to 148; that stretch reads MPPEAQHALDEVQKKPASRKP.

This sequence belongs to the CcmE/CycJ family.

The protein localises to the cell inner membrane. Heme chaperone required for the biogenesis of c-type cytochromes. Transiently binds heme delivered by CcmC and transfers the heme to apo-cytochromes in a process facilitated by CcmF and CcmH. This chain is Cytochrome c-type biogenesis protein CcmE, found in Pseudomonas aeruginosa.